The primary structure comprises 766 residues: Semaphorin-4E (766 aa).

The N-terminal stretch at 1–24 (MMSLLAVLCVLYVWSPAMLTGGLG) is a signal peptide. Residues 25-664 (STLDSLPRKT…LHHVKEKERT (640 aa)) are Extracellular-facing. The Sema domain maps to 27–499 (LDSLPRKTVP…SEVGVVQLSI (473 aa)). The N-linked (GlcNAc...) asparagine glycan is linked to Asn-52. Cystine bridges form between Cys-100–Cys-111, Cys-129–Cys-138, Cys-261–Cys-373, and Cys-285–Cys-329. An N-linked (GlcNAc...) asparagine glycan is attached at Asn-433. The region spanning 501 to 552 (ECGRYQTCLDCVLARDPHCGWDLDTEHCATINSIHRTRSSTVIQSLNDGDAS) is the PSI domain. Disulfide bonds link Cys-502–Cys-519 and Cys-511–Cys-528. One can recognise an Ig-like C2-type domain in the interval 555 to 640 (PAIGVSKPVN…QRKYQTQHVA (86 aa)). Residues Asn-564 and Asn-612 are each glycosylated (N-linked (GlcNAc...) asparagine). Residues Cys-577 and Cys-623 are joined by a disulfide bond. Residues 665 to 685 (LVAMVVILSLVLAALLIWNLY) form a helical membrane-spanning segment. Over 686–766 (KGHLSLPCLH…LKYIDDESEI (81 aa)) the chain is Cytoplasmic. A disordered region spans residues 724–750 (FNSNNNHANDQRYSSSRETDRLSTTAG).

It belongs to the semaphorin family.

The protein resides in the membrane. The protein is Semaphorin-4E (sema4e) of Danio rerio (Zebrafish).